A 176-amino-acid polypeptide reads, in one-letter code: Skp1-related protein (176 aa).

The protein belongs to the SKP1 family. As to quaternary structure, probable component of the SCF(sel-10) E3 ubiquitin-protein ligase complex containing F-box domain-containing protein sel-10 as the substrate recognition component. Interacts with cul-1. May interact with the F-box protein mec-15. Interacts with dre-1. Interacts with syg-1. Interacts with sel-10. Ubiquitously expressed in the adult.

In terms of biological role, probable essential component of SCF (SKP1-CUL1-F-box protein) E3 ubiquitin-protein ligase complexes, which mediate the ubiquitination and subsequent proteasomal degradation of target proteins. Regulates cell proliferation during embryonic and larval development. Involved in synapse elimination in early synapse development. May negatively regulate the apoptotic activity of cep-1 in response to genotoxic stress. Plays a role in sex determination. The sequence is that of Skp1-related protein from Caenorhabditis elegans.